Here is a 224-residue protein sequence, read N- to C-terminus: UPF0173 metal-dependent hydrolase STH3160 (224 aa).

This sequence belongs to the UPF0173 family.

The protein is UPF0173 metal-dependent hydrolase STH3160 of Symbiobacterium thermophilum (strain DSM 24528 / JCM 14929 / IAM 14863 / T).